A 481-amino-acid chain; its full sequence is Aspartyl/glutamyl-tRNA(Asn/Gln) amidotransferase subunit B (481 aa).

Belongs to the GatB/GatE family. GatB subfamily. As to quaternary structure, heterotrimer of A, B and C subunits.

It carries out the reaction L-glutamyl-tRNA(Gln) + L-glutamine + ATP + H2O = L-glutaminyl-tRNA(Gln) + L-glutamate + ADP + phosphate + H(+). It catalyses the reaction L-aspartyl-tRNA(Asn) + L-glutamine + ATP + H2O = L-asparaginyl-tRNA(Asn) + L-glutamate + ADP + phosphate + 2 H(+). Functionally, allows the formation of correctly charged Asn-tRNA(Asn) or Gln-tRNA(Gln) through the transamidation of misacylated Asp-tRNA(Asn) or Glu-tRNA(Gln) in organisms which lack either or both of asparaginyl-tRNA or glutaminyl-tRNA synthetases. The reaction takes place in the presence of glutamine and ATP through an activated phospho-Asp-tRNA(Asn) or phospho-Glu-tRNA(Gln). This is Aspartyl/glutamyl-tRNA(Asn/Gln) amidotransferase subunit B from Teredinibacter turnerae (strain ATCC 39867 / T7901).